The sequence spans 198 residues: Tumor necrosis factor receptor superfamily member 22 (198 aa).

Over M1–R20 the chain is Cytoplasmic. A helical; Signal-anchor for type II membrane protein membrane pass occupies residues L21–L41. Over E42–R198 the chain is Extracellular. TNFR-Cys repeat units lie at residues K47 to C82, K84 to C124, and Q125 to C165. 9 cysteine pairs are disulfide-bonded: C48/C59, C60/C73, C63/C82, C85/C100, C103/C116, C106/C124, C126/C141, C144/C157, and C147/C165. The N-linked (GlcNAc...) asparagine glycan is linked to N62. N158 is a glycosylation site (N-linked (GlcNAc...) asparagine).

In terms of tissue distribution, ubiquitous.

The protein localises to the cell membrane. Its subcellular location is the secreted. Functionally, receptor for the cytotoxic ligand TNFSF10/TRAIL. Lacks a cytoplasmic death domain and hence is not capable of inducing apoptosis. Protects cells against TRAIL mediated apoptosis possibly through ligand competition. Cannot induce the NF-kappa-B pathway. This chain is Tumor necrosis factor receptor superfamily member 22 (Tnfrsf22), found in Mus musculus (Mouse).